Consider the following 255-residue polypeptide: Proteasome subunit alpha (255 aa).

The tract at residues arginine 224–glycine 255 is disordered.

Belongs to the peptidase T1A family. In terms of assembly, the 20S proteasome core is composed of 14 alpha and 14 beta subunits that assemble into four stacked heptameric rings, resulting in a barrel-shaped structure. The two inner rings, each composed of seven catalytic beta subunits, are sandwiched by two outer rings, each composed of seven alpha subunits. The catalytic chamber with the active sites is on the inside of the barrel. Has a gated structure, the ends of the cylinder being occluded by the N-termini of the alpha-subunits. Is capped by the proteasome-associated ATPase, ARC.

It is found in the cytoplasm. The protein operates within protein degradation; proteasomal Pup-dependent pathway. With respect to regulation, the formation of the proteasomal ATPase ARC-20S proteasome complex, likely via the docking of the C-termini of ARC into the intersubunit pockets in the alpha-rings, may trigger opening of the gate for substrate entry. Interconversion between the open-gate and close-gate conformations leads to a dynamic regulation of the 20S proteasome proteolysis activity. Component of the proteasome core, a large protease complex with broad specificity involved in protein degradation. The sequence is that of Proteasome subunit alpha from Nocardioides sp. (strain ATCC BAA-499 / JS614).